Here is a 53-residue protein sequence, read N- to C-terminus: Large ribosomal subunit protein bL32c (53 aa).

Residues 1–21 (MAVPKKRTSKSKKKSRRSHWI) form a disordered region.

This sequence belongs to the bacterial ribosomal protein bL32 family.

The protein resides in the plastid. Its subcellular location is the chloroplast. The chain is Large ribosomal subunit protein bL32c (rpl32) from Cyanidium caldarium (Red alga).